Here is a 71-residue protein sequence, read N- to C-terminus: DNA-directed RNA polymerase subunit 10-like protein (71 aa).

4 residues coordinate Zn(2+): C7, C10, C44, and C45.

It belongs to the archaeal Rpo10/eukaryotic RPB10 RNA polymerase subunit family. Interacts with IYO.

It localises to the nucleus. This Arabidopsis thaliana (Mouse-ear cress) protein is DNA-directed RNA polymerase subunit 10-like protein.